A 246-amino-acid chain; its full sequence is Virulence plasmid protein pGP6-D (246 aa).

Belongs to the UPF0137 (pGP6-D) family.

This is Virulence plasmid protein pGP6-D from Chlamydia psittaci (Chlamydophila psittaci).